The primary structure comprises 183 residues: MKVLIVALALLALAASAASSTSGGCGCQTPPFHLPPPFYMPPPFYLPPQQQPQPWQYPTQPPQLSPCQQFGSCGVGSVGSPFLGQCVEFLRHQCSPAATPYGSPQCQALQQQCCHQIRQVEPLHRYQATYGVVLQSFLQQQPQGELAALMAAQVAQQLTAMCGLQLQQPGPCPCNAAAGGVYY.

A signal peptide spans 1–19; that stretch reads MKVLIVALALLALAASAAS.

Interacts with OP10 (via N-terminus).

It localises to the vacuole. The protein localises to the aleurone grain. In terms of biological role, zeins are major seed storage proteins. The protein is 16 kDa gamma-zein of Zea mays (Maize).